The following is a 285-amino-acid chain: Shikimate dehydrogenase (NADP(+)) (285 aa).

Residues 20–22 (SRS) and threonine 67 contribute to the shikimate site. Lysine 71 serves as the catalytic Proton acceptor. Asparagine 93 and aspartate 108 together coordinate shikimate. Residues 132-136 (GAGGA) and methionine 224 contribute to the NADP(+) site. Shikimate is bound at residue tyrosine 226. Glycine 248 contributes to the NADP(+) binding site.

It belongs to the shikimate dehydrogenase family. As to quaternary structure, homodimer.

It catalyses the reaction shikimate + NADP(+) = 3-dehydroshikimate + NADPH + H(+). It participates in metabolic intermediate biosynthesis; chorismate biosynthesis; chorismate from D-erythrose 4-phosphate and phosphoenolpyruvate: step 4/7. Involved in the biosynthesis of the chorismate, which leads to the biosynthesis of aromatic amino acids. Catalyzes the reversible NADPH linked reduction of 3-dehydroshikimate (DHSA) to yield shikimate (SA). This is Shikimate dehydrogenase (NADP(+)) from Bordetella avium (strain 197N).